The chain runs to 571 residues: Methionine--tRNA ligase (571 aa).

Positions 10–20 (PYVNAVPHLGN) match the 'HIGH' region motif. Zn(2+)-binding residues include Cys143, Cys146, Cys156, and Cys159. The 'KMSKS' region signature appears at 333–337 (KFSKS). Residue Lys336 participates in ATP binding.

Belongs to the class-I aminoacyl-tRNA synthetase family. MetG type 1 subfamily. Zn(2+) is required as a cofactor.

It localises to the cytoplasm. The catalysed reaction is tRNA(Met) + L-methionine + ATP = L-methionyl-tRNA(Met) + AMP + diphosphate. Its function is as follows. Is required not only for elongation of protein synthesis but also for the initiation of all mRNA translation through initiator tRNA(fMet) aminoacylation. In Sulfurisphaera tokodaii (strain DSM 16993 / JCM 10545 / NBRC 100140 / 7) (Sulfolobus tokodaii), this protein is Methionine--tRNA ligase.